The chain runs to 138 residues: Cysteine desulfuration protein SufE (138 aa).

Catalysis depends on Cys-51, which acts as the Cysteine persulfide intermediate.

This sequence belongs to the SufE family. As to quaternary structure, homodimer. Interacts with SufS.

It localises to the cytoplasm. It functions in the pathway cofactor biosynthesis; iron-sulfur cluster biosynthesis. Its function is as follows. Participates in cysteine desulfuration mediated by SufS. Cysteine desulfuration mobilizes sulfur from L-cysteine to yield L-alanine and constitutes an essential step in sulfur metabolism for biosynthesis of a variety of sulfur-containing biomolecules. Functions as a sulfur acceptor for SufS, by mediating the direct transfer of the sulfur atom from the S-sulfanylcysteine of SufS, an intermediate product of cysteine desulfuration process. This Shigella flexneri serotype 5b (strain 8401) protein is Cysteine desulfuration protein SufE.